The chain runs to 277 residues: Urease accessory protein UreD (277 aa).

It belongs to the UreD family. As to quaternary structure, ureD, UreF and UreG form a complex that acts as a GTP-hydrolysis-dependent molecular chaperone, activating the urease apoprotein by helping to assemble the nickel containing metallocenter of UreC. The UreE protein probably delivers the nickel.

Its subcellular location is the cytoplasm. Functionally, required for maturation of urease via the functional incorporation of the urease nickel metallocenter. The chain is Urease accessory protein UreD from Pseudomonas putida (strain ATCC 47054 / DSM 6125 / CFBP 8728 / NCIMB 11950 / KT2440).